The chain runs to 236 residues: Acetate--CoA ligase [ADP-forming] II subunit beta (236 aa).

One can recognise an ATP-grasp domain in the interval K26–K62. ATP is bound at residue A52–L63.

Belongs to the acetate CoA ligase beta subunit family. As to quaternary structure, heterotetramer of two alpha and two beta subunits.

The enzyme catalyses acetate + ATP + CoA = acetyl-CoA + ADP + phosphate. Functionally, catalyzes the reversible formation of acetate and ATP from acetyl-CoA by using ADP and phosphate. Can use other substrates such as phenylacetyl-CoA, indoleacetyl-CoA and isobutyryl-CoA, but not succinyl-CoA. Seems to be involved primarily in the degradation of aryl-CoA esters to the corresponding acids. Participates in the conversion of acetyl-CoA to acetate and in the degradation of branched-chain amino acids via branched-chain-acyl-CoA esters. The sequence is that of Acetate--CoA ligase [ADP-forming] II subunit beta from Pyrococcus furiosus (strain ATCC 43587 / DSM 3638 / JCM 8422 / Vc1).